Reading from the N-terminus, the 454-residue chain is F-box/WD repeat-containing protein 2 (454 aa).

The F-box domain occupies 54–101 (RDFLKLLPLELSFYLLKWLDPQTLLTCCLVSKQWNKVISACTEVWQTA). WD repeat units follow at residues 146-183 (GHSA…CVYG), 185-221 (QTHT…RTQH), 224-265 (GHTG…NTLT), and 276-314 (LQQC…NCKC). An N6-acetyllysine modification is found at lysine 298.

Directly interacts with SKP1 and CUL1.

Its function is as follows. Substrate-recognition component of the SCF (SKP1-CUL1-F-box protein)-type E3 ubiquitin ligase complex. The protein is F-box/WD repeat-containing protein 2 of Rattus norvegicus (Rat).